The following is a 646-amino-acid chain: RNA-binding protein RMD9, mitochondrial (646 aa).

A mitochondrion-targeting transit peptide spans 1 to 14; that stretch reads MMLRRNAVRSLKTM. The propeptide at 15 to 51 is removed in mature form; it reads EISVSNVVNSGSIAMLRGKLANVVLSDRTYHSSPIFH. The stretch at 209-238 is one PPR1 repeat; that stretch reads VSGYGATHLLTSFKELSFDDDCIRIWEASK. The stretch at 251 to 282 is one PPR2 repeat; the sequence is EPKVVGFMLPLLYAKTRSLTEPNELYNQIIQS. One copy of the PPR3 repeat lies at 288–317; sequence PNLYSGLIKVFIKAEDYEKALSLFGQLCEK. One copy of the PPR4 repeat lies at 323–353; it reads YGYLIETHLSFIGDSKNLTLAESFFDKIIND. A PPR5 repeat occupies 363–394; sequence VSTVNSFLQNIWKAQNDFDHVYRIWEKAVKFY. The PPR6 repeat unit spans residues 401 to 439; it reads GILSSLNNTFFTIFFENYINDNINGFRKLQEIITFYSGV. The stretch at 444-473 is one PPR7 repeat; that stretch reads EPFFNVMLTRASIWHERSIIDFIDKNYTLY. The PPR8 repeat unit spans residues 481 to 514; sequence SYRILLKSLGSIDNTNNEEILDRWLELVKKLNEL.

This sequence belongs to the RMD9 family. Monomer. Post-translationally, phosphorylated. Phosphorylation promotes binding to RNA.

It localises to the mitochondrion inner membrane. Binds the RNA motif 5'-AAUAA[U/C]AUUCUU-3' in the 3'-UTR of mitochondrial mRNAs. Involved in the processing or stability of mitochondrial mRNAs. This is RNA-binding protein RMD9, mitochondrial from Saccharomyces cerevisiae (strain ATCC 204508 / S288c) (Baker's yeast).